The following is a 180-amino-acid chain: ATP synthase subunit delta (180 aa).

The protein belongs to the ATPase delta chain family. In terms of assembly, F-type ATPases have 2 components, F(1) - the catalytic core - and F(0) - the membrane proton channel. F(1) has five subunits: alpha(3), beta(3), gamma(1), delta(1), epsilon(1). F(0) has three main subunits: a(1), b(2) and c(10-14). The alpha and beta chains form an alternating ring which encloses part of the gamma chain. F(1) is attached to F(0) by a central stalk formed by the gamma and epsilon chains, while a peripheral stalk is formed by the delta and b chains.

The protein resides in the cell membrane. Functionally, f(1)F(0) ATP synthase produces ATP from ADP in the presence of a proton or sodium gradient. F-type ATPases consist of two structural domains, F(1) containing the extramembraneous catalytic core and F(0) containing the membrane proton channel, linked together by a central stalk and a peripheral stalk. During catalysis, ATP synthesis in the catalytic domain of F(1) is coupled via a rotary mechanism of the central stalk subunits to proton translocation. In terms of biological role, this protein is part of the stalk that links CF(0) to CF(1). It either transmits conformational changes from CF(0) to CF(1) or is implicated in proton conduction. The chain is ATP synthase subunit delta from Ligilactobacillus salivarius (strain UCC118) (Lactobacillus salivarius).